The primary structure comprises 171 residues: LIM domain transcription factor LMO4-A (171 aa).

Over residues 1–19 (MVNNRSSESTTTAVSSNGS) the composition is skewed to polar residues. Positions 1-21 (MVNNRSSESTTTAVSSNGSPP) are disordered. 2 consecutive LIM zinc-binding domains span residues 22–84 (KACA…LFGN) and 86–148 (GACN…GLLN).

At the start of gastrulation (stage 10), expressed in the mesodermal marginal zone. Shortly after (stage 11), expression is down-regulated in the dorsal most region. During neurulation, expressed in the neural plate and ventral epidermis. At late neurula stages, also expressed more rostrally, and then in the brain, migrating neural crests and ventral epidermis.

Acts as a positive cofactor of GATA transcription factors to establish the identity of the ventral mesoderm during gastrulation. Down-regulation in the dorsal mesoderm is necessary for the proper formation of this territory since, when present, lmo4 may bind ldb1 and restrict the availability of this cofactor for Spemman organizer transcription factors. At neurula stages, suppresses primary neuron differentiation and modulates gene expression at the Isthmic Organizer of the midbrain-hindbrain boundary. The polypeptide is LIM domain transcription factor LMO4-A (lmo4-a) (Xenopus laevis (African clawed frog)).